A 264-amino-acid chain; its full sequence is 3-methyl-2-oxobutanoate hydroxymethyltransferase (264 aa).

Mg(2+) contacts are provided by Asp-45 and Asp-84. 3-methyl-2-oxobutanoate-binding positions include 45–46 (DS), Asp-84, and Lys-113. Glu-115 provides a ligand contact to Mg(2+). Glu-182 serves as the catalytic Proton acceptor.

It belongs to the PanB family. Homodecamer; pentamer of dimers. Mg(2+) is required as a cofactor.

The protein resides in the cytoplasm. It carries out the reaction 3-methyl-2-oxobutanoate + (6R)-5,10-methylene-5,6,7,8-tetrahydrofolate + H2O = 2-dehydropantoate + (6S)-5,6,7,8-tetrahydrofolate. It participates in cofactor biosynthesis; (R)-pantothenate biosynthesis; (R)-pantoate from 3-methyl-2-oxobutanoate: step 1/2. Catalyzes the reversible reaction in which hydroxymethyl group from 5,10-methylenetetrahydrofolate is transferred onto alpha-ketoisovalerate to form ketopantoate. The protein is 3-methyl-2-oxobutanoate hydroxymethyltransferase of Caldicellulosiruptor bescii (strain ATCC BAA-1888 / DSM 6725 / KCTC 15123 / Z-1320) (Anaerocellum thermophilum).